Reading from the N-terminus, the 72-residue chain is Translation initiation factor IF-1 (72 aa).

The 72-residue stretch at 1-72 folds into the S1-like domain; that stretch reads MAKEEVLEFP…TKGRITYRLK (72 aa).

The protein belongs to the IF-1 family. Component of the 30S ribosomal translation pre-initiation complex which assembles on the 30S ribosome in the order IF-2 and IF-3, IF-1 and N-formylmethionyl-tRNA(fMet); mRNA recruitment can occur at any time during PIC assembly.

The protein resides in the cytoplasm. In terms of biological role, one of the essential components for the initiation of protein synthesis. Stabilizes the binding of IF-2 and IF-3 on the 30S subunit to which N-formylmethionyl-tRNA(fMet) subsequently binds. Helps modulate mRNA selection, yielding the 30S pre-initiation complex (PIC). Upon addition of the 50S ribosomal subunit IF-1, IF-2 and IF-3 are released leaving the mature 70S translation initiation complex. This chain is Translation initiation factor IF-1, found in Brucella suis biovar 1 (strain 1330).